The primary structure comprises 1499 residues: Rho GTPase-activating protein 35 (1499 aa).

Residues 1–266 (MMMARKQDVR…IPYFEALKQQ (266 aa)) form a has GTPase activity, required for proper localization region. Residues Lys-28, 33-37 (IGKSC), Leu-52, Ser-56, 95-97 (EQT), 201-203 (KCD), and 229-231 (SAR) contribute to the GTP site. 4 FF domains span residues 270–327 (IATA…HIHR), 368–422 (KLLE…HLEK), 429–483 (RAEM…HQKQ), and 485–550 (IDRA…HIHF). Phosphotyrosine is present on Tyr-308. Residue Ser-589 is modified to Phosphoserine. The pG1 pseudoGTPase domain occupies 592–767 (DPNIDRINLV…LLDSKRNLNL (176 aa)). A phosphoserine mark is found at Ser-770 and Ser-773. Residues 783 to 947 (RIVMCLMCGD…FKDVVEKKNI (165 aa)) form the pG2 pseudoGTPase domain. Ser-970, Ser-975, Ser-985, and Ser-1072 each carry phosphoserine. A Phosphotyrosine modification is found at Tyr-1087. The residue at position 1105 (Tyr-1105) is a Phosphotyrosine; by ABL2 and PTK6. The span at 1124–1141 (KAQSNGSGNGSDSEMDTS) shows a compositional bias: polar residues. Residues 1124–1148 (KAQSNGSGNGSDSEMDTSSLERGRK) are disordered. Residues Ser-1134, Ser-1142, Ser-1150, Ser-1176, Ser-1179, and Ser-1221 each carry the phosphoserine modification. A disordered region spans residues 1177 to 1207 (VGSDDELGPIRKKEEDQASQGYKGDNAVIPY). The required for phospholipid binding and regulation of the substrate preference stretch occupies residues 1213–1236 (PRRRNILRSLRRNTKKPKPKPRPS). Position 1226 is a phosphothreonine (Thr-1226). Ser-1236 carries the post-translational modification Phosphoserine. Residues 1249 to 1436 (VPLTTVVTPE…LFIQQCPFFF (188 aa)) enclose the Rho-GAP domain. Residues 1446–1499 (GAAPGSPSAMAPTVPFLTSTPATSQPSPPQSPPPTPQSPMQPLLSSQLQAEHTL) are disordered. Over residues 1448 to 1470 (APGSPSAMAPTVPFLTSTPATSQ) the composition is skewed to low complexity. The segment covering 1471–1484 (PSPPQSPPPTPQSP) has biased composition (pro residues). Ser-1472 and Ser-1476 each carry phosphoserine. Residue Thr-1480 is modified to Phosphothreonine. Ser-1483 carries the phosphoserine modification. The span at 1485–1499 (MQPLLSSQLQAEHTL) shows a compositional bias: low complexity.

Interacts with RASA1. Interacts with the general transcription factor GTF2I, the interaction sequesters GTF2I in the cytoplasm. Phosphorylation of Tyr-1105 by PTK6 promotes the association with RASA1, inactivating RHOA while activating RAS. Phosphorylation at Tyr-308 by PDGFRA inhibits binding to GTF2I. Phosphorylated by PRKCA at Ser-1221 and Thr-1226, induces relocalization from the cytoplasm to regions of plasma membrane ruffling and prevents the binding and substrate specificity regulation by phospholipids. In brain, phosphorylated by FYN and SRC. During focal adhesion formation, phosphorylated by MAPK1 and MAPK3 at the C-terminal region, probably at Ser-1451, Ser-1476, Thr-1480 and Ser-1483. Phosphorylation by MAPK1 and MAPK3 inhibits GAP function and localizes ARGHAP35 away from newly forming focal adhesions and stress fibers in cells spreading on fibronectin. Phosphorylation at Ser-1476 and Thr-1480 by GSK3B requires priming by MAPK and inhibits RhoGAP activity and modulates polarized cell migration. Ubiquitously expressed.

Its subcellular location is the cytoplasm. It localises to the cytoskeleton. The protein localises to the cilium basal body. It is found in the nucleus. The protein resides in the cell membrane. Functionally, rho GTPase-activating protein (GAP). Binds several acidic phospholipids which inhibits the Rho GAP activity to promote the Rac GAP activity. This binding is inhibited by phosphorylation by PRKCA. Involved in cell differentiation as well as cell adhesion and migration, plays an important role in retinal tissue morphogenesis, neural tube fusion, midline fusion of the cerebral hemispheres and mammary gland branching morphogenesis. Transduces signals from p21-ras to the nucleus, acting via the ras GTPase-activating protein (GAP). Transduces SRC-dependent signals from cell-surface adhesion molecules, such as laminin, to promote neurite outgrowth. Regulates axon outgrowth, guidance and fasciculation. Modulates Rho GTPase-dependent F-actin polymerization, organization and assembly, is involved in polarized cell migration and in the positive regulation of ciliogenesis and cilia elongation. During mammary gland development, is required in both the epithelial and stromal compartments for ductal outgrowth. Represses transcription of the glucocorticoid receptor by binding to the cis-acting regulatory sequence 5'-GAGAAAAGAAACTGGAGAAACTC-3'; this function is however unclear and would need additional experimental evidences. The protein is Rho GTPase-activating protein 35 of Rattus norvegicus (Rat).